The following is a 616-amino-acid chain: MAU2 chromatid cohesion factor homolog (616 aa).

TPR repeat units lie at residues 90 to 123 (FDTASLLAQLYQQQEQSSLAKPVLRKAIELSQHN), 445 to 478 (GSFYYVQGLNAFHKSSFHEAKRFLRETLKMANAE), and 485 to 518 (SCSLVLLSHVFLSIGNSKESMNMVTPAMQLASKI).

Belongs to the SCC4/mau-2 family. As to quaternary structure, component of the cohesin loading complex.

It localises to the nucleus. The protein localises to the nucleoplasm. In terms of biological role, required for association of the cohesin complex with chromatin during interphase. Plays a role in sister chromatid cohesion and normal progression through prometaphase. The polypeptide is MAU2 chromatid cohesion factor homolog (Culex quinquefasciatus (Southern house mosquito)).